Reading from the N-terminus, the 510-residue chain is Cytochrome P450 monooxygenase penQ (510 aa).

The helical transmembrane segment at 9–26 (WIVTLIVAATTYCTLRWV) threads the bilayer. N-linked (GlcNAc...) asparagine glycans are attached at residues Asn148 and Asn341. Cys448 is a binding site for heme. The N-linked (GlcNAc...) asparagine glycan is linked to Asn482.

Belongs to the cytochrome P450 family. The cofactor is heme.

The protein resides in the membrane. It functions in the pathway secondary metabolite biosynthesis. In terms of biological role, cytochrome P450 monooxygenase; part of the gene cluster that mediates the biosynthesis of the indole diterpenes penitrems. The geranylgeranyl diphosphate (GGPP) synthase penG catalyzes the first step in penitrem biosynthesis via conversion of farnesyl pyrophosphate and isopentyl pyrophosphate into geranylgeranyl pyrophosphate (GGPP). Condensation of indole-3-glycerol phosphate with GGPP by the prenyl transferase penC then forms 3-geranylgeranylindole (3-GGI). Epoxidation by the FAD-dependent monooxygenase penM leads to a epoxidized-GGI that is substrate of the terpene cyclase penB for cyclization to yield paspaline. Paspaline is subsequently converted to 13-desoxypaxilline by the cytochrome P450 monooxygenase penP, the latter being then converted to paxilline by the cytochrome P450 monooxygenase penQ. Paxilline is converted to beta-paxitriol via C-10 ketoreduction by the short-chain dehydrogenase PC-15 which can be monoprenylated at the C-20 by the indole diterpene prenyltransferase penD. A two-step elimination (acetylation and elimination) process performed by the O-acetyltransferase PC-16 and the P.simplicissimum ptmI-ortholog not yet identified in P.crustosum, leads to the production of the prenylated form of penijanthine. The FAD-linked oxidoreductase ptmO then converts the prenylated form of penijanthine into PC-M5 which is in turn transformed into PC-M4 by the aromatic dimethylallyltransferase PC-22. A series of oxidation steps involving 4 cytochrome P450 monooxygenases (PC-21, PC-05, PC-23, PC-20) and a FAD-dependent monooxygenase (PC-14) are required for the transformation of PC-M4 to penitrems A and E. Synthesis of these final products is proposed to proceed via penitrems D and C (PC-21, PC-05, PC-14) and penitrems B and F (PC-21, PC-05, PC-14, PC-23). The chain is Cytochrome P450 monooxygenase penQ from Penicillium crustosum (Blue mold fungus).